Consider the following 381-residue polypeptide: Chaperone protein DnaJ (381 aa).

The 66-residue stretch at 5–70 (DYYEVLGVSR…DKKAAYDRYG (66 aa)) folds into the J domain. The CR-type zinc-finger motif lies at 140–218 (GVQKTINVPA…CHGAGRVEKE (79 aa)). Residues Cys-153, Cys-156, Cys-170, Cys-173, Cys-192, Cys-195, Cys-206, and Cys-209 each coordinate Zn(2+). CXXCXGXG motif repeat units follow at residues 153-160 (CDACKGTG), 170-177 (CPTCSGMG), 192-199 (CPTCNGMG), and 206-213 (CKVCHGAG).

This sequence belongs to the DnaJ family. As to quaternary structure, homodimer. Requires Zn(2+) as cofactor.

It localises to the cytoplasm. Participates actively in the response to hyperosmotic and heat shock by preventing the aggregation of stress-denatured proteins and by disaggregating proteins, also in an autonomous, DnaK-independent fashion. Unfolded proteins bind initially to DnaJ; upon interaction with the DnaJ-bound protein, DnaK hydrolyzes its bound ATP, resulting in the formation of a stable complex. GrpE releases ADP from DnaK; ATP binding to DnaK triggers the release of the substrate protein, thus completing the reaction cycle. Several rounds of ATP-dependent interactions between DnaJ, DnaK and GrpE are required for fully efficient folding. Also involved, together with DnaK and GrpE, in the DNA replication of plasmids through activation of initiation proteins. In Cereibacter sphaeroides (strain KD131 / KCTC 12085) (Rhodobacter sphaeroides), this protein is Chaperone protein DnaJ.